We begin with the raw amino-acid sequence, 333 residues long: MDERLLSGESAYEDADLEYSLRPQTLRQYIGQDKAKHNLEVFIEAAKMREETLDHVLLYGPPGLGKTTLANIIANEMGVNVRTTSGPAIERPGDLAAVLTSLQPGDVLFIDEIHRLHRSIEEVLYPAMEDFCLDIVIGKGPSARSVRLDLPPFTLVGATTRAGALSAPLRDRFGVLSRLEYYTVDQLSAIVERTGEVFEVEINSLAALEIARRARGTPRIANRLLRRVRDFAQVRGNGTVTMEITQMALELLQVDKLGLDHIDHKLLLGIIEKFRGGPVGLETVSATIGEESHTIEDVYEPYLLQIGFLQRTPRGRIVTPLAYEHFGMEMPKV.

Residues Met1 to Tyr182 form a large ATPase domain (RuvB-L) region. ATP contacts are provided by residues Leu21, Arg22, Gly63, Lys66, Thr67, Thr68, Glu129–Phe131, Arg172, Tyr182, and Arg219. A Mg(2+)-binding site is contributed by Thr67. A small ATPAse domain (RuvB-S) region spans residues Thr183 to Gln253. Residues Lys256 to Val333 are head domain (RuvB-H). 2 residues coordinate DNA: Arg311 and Arg316.

Belongs to the RuvB family. Homohexamer. Forms an RuvA(8)-RuvB(12)-Holliday junction (HJ) complex. HJ DNA is sandwiched between 2 RuvA tetramers; dsDNA enters through RuvA and exits via RuvB. An RuvB hexamer assembles on each DNA strand where it exits the tetramer. Each RuvB hexamer is contacted by two RuvA subunits (via domain III) on 2 adjacent RuvB subunits; this complex drives branch migration. In the full resolvosome a probable DNA-RuvA(4)-RuvB(12)-RuvC(2) complex forms which resolves the HJ.

The protein resides in the cytoplasm. The catalysed reaction is ATP + H2O = ADP + phosphate + H(+). The RuvA-RuvB-RuvC complex processes Holliday junction (HJ) DNA during genetic recombination and DNA repair, while the RuvA-RuvB complex plays an important role in the rescue of blocked DNA replication forks via replication fork reversal (RFR). RuvA specifically binds to HJ cruciform DNA, conferring on it an open structure. The RuvB hexamer acts as an ATP-dependent pump, pulling dsDNA into and through the RuvAB complex. RuvB forms 2 homohexamers on either side of HJ DNA bound by 1 or 2 RuvA tetramers; 4 subunits per hexamer contact DNA at a time. Coordinated motions by a converter formed by DNA-disengaged RuvB subunits stimulates ATP hydrolysis and nucleotide exchange. Immobilization of the converter enables RuvB to convert the ATP-contained energy into a lever motion, pulling 2 nucleotides of DNA out of the RuvA tetramer per ATP hydrolyzed, thus driving DNA branch migration. The RuvB motors rotate together with the DNA substrate, which together with the progressing nucleotide cycle form the mechanistic basis for DNA recombination by continuous HJ branch migration. Branch migration allows RuvC to scan DNA until it finds its consensus sequence, where it cleaves and resolves cruciform DNA. In Bacillus cereus (strain 03BB102), this protein is Holliday junction branch migration complex subunit RuvB.